We begin with the raw amino-acid sequence, 1189 residues long: Phosphatidylinositol 3,4,5-trisphosphate 5-phosphatase 1 (1189 aa).

Positions 5 to 101 (WNHGNITRSK…GLVTHLQYPV (97 aa)) constitute an SH2 domain. Residues 103–117 (LEEEDTGDDPEEDTV) show a composition bias toward acidic residues. The disordered stretch occupies residues 103–132 (LEEEDTGDDPEEDTVESVVSPPELPPRNIP). The SH3-binding 1 motif lies at 124–129 (PELPPR). Serine 243 is subject to Phosphoserine. The disordered stretch occupies residues 870 to 906 (TERDESSGPKTLKSLTSHDPMKQWEVTSRAPPCSGSS). The NPXY motif 1 signature appears at 912 to 915 (NPNY). Tyrosine 915 is subject to Phosphotyrosine. Positions 922-1189 (GPPMPLHVKQ…PGPLGRTAMQ (268 aa)) are disordered. Residues 931–943 (QTLSPDQQPTAWS) show a composition bias toward polar residues. Serine 934 is subject to Phosphoserine. Phosphotyrosine is present on tyrosine 944. A Phosphoserine modification is found at serine 960. Pro residues predominate over residues 961-971 (PPTPPGQPPIS). Threonine 963 carries the post-translational modification Phosphothreonine. The SH3-binding 2 motif lies at 969-974 (PISPKK). Serine 971 is subject to Phosphoserine. Residues 1016–1030 (MFENPLYGSLSSFPK) are interaction with DAB2. The NPXY motif 2 signature appears at 1019–1022 (NPLY). Tyrosine 1022 bears the Phosphotyrosine mark. A compositionally biased stretch (basic and acidic residues) spans 1033 to 1047 (PRKDQESPKMPRKEP). Residues 1040 to 1051 (PKMPRKEPPPCP) carry the SH3-binding 3 motif. The span at 1134–1145 (PPTPTPRPPLPV) shows a compositional bias: pro residues. The segment covering 1157-1177 (KGRDYRDNTELPHHGKHRPEE) has biased composition (basic and acidic residues).

The protein belongs to the inositol 1,4,5-trisphosphate 5-phosphatase family. In terms of assembly, interacts with tyrosine phosphorylated form of SHC1. Interacts with tyrosine phosphorylated form of DOK1. Interacts with tyrosine phosphorylated form of DOK3. Interacts with tyrosine phosphorylated form of SLAMF1/CD150. Interacts with PTPN11 in response to IL-3. Interacts with receptor EPOR. Interacts with receptors MS4A2/FCER1B and FCER1G. Interacts with receptors FCGR2B and FCGR3. Interacts with receptor FCGR2A, leading to regulate gene expression during the phagocytic process. Interacts with GRB2. Interacts with PLCG1. Interacts with tyrosine kinases SRC and TEC. Interacts with c-Met/MET. Interacts with MILR1 (tyrosine-phosphorylated). Can weakly interact (via NPXY motif 2) with DAB2 (via PID domain); the interaction is impaired by tyrosine phosphorylation of the NPXY motif. Interacts with FCRL3 and FCRL6 (tyrosine phosphorylated form). Interacts (via SH2 domain) with tyrosine phosphorylated KLRC1 (via ITIM). Interacts with MPL/TPOR. Post-translationally, tyrosine phosphorylated by the members of the SRC family after exposure to a diverse array of extracellular stimuli such as cytokines, growth factors, antibodies, chemokines, integrin ligands and hypertonic and oxidative stress. Phosphorylated upon IgG receptor FCGR2B-binding. As to expression, specifically expressed in immune and hematopoietic cells. Expressed in bone marrow and blood cells. Levels vary considerably within this compartment. Present in at least 74% of immature CD34+ cells, whereas within the more mature population of CD33+ cells, it is present in only 10% of cells. Present in the majority of T-cells, while it is present in a minority of B-cells (at protein level).

Its subcellular location is the cytoplasm. The protein resides in the cell membrane. The protein localises to the membrane raft. It localises to the cytoskeleton. It is found in the membrane. The enzyme catalyses a 1,2-diacyl-sn-glycero-3-phospho-(1D-myo-inositol-3,4,5-trisphosphate) + H2O = a 1,2-diacyl-sn-glycero-3-phospho-(1D-myo-inositol-3,4-bisphosphate) + phosphate. The catalysed reaction is 1D-myo-inositol 1,3,4,5-tetrakisphosphate + H2O = 1D-myo-inositol 1,3,4-trisphosphate + phosphate. It catalyses the reaction a 1,2-diacyl-sn-glycero-3-phospho-(1D-myo-inositol-4,5-bisphosphate) + H2O = a 1,2-diacyl-sn-glycero-3-phospho-(1D-myo-inositol 4-phosphate) + phosphate. Activated upon translocation to the sites of synthesis of PtdIns(3,4,5)P3 in the membrane. Functionally, phosphatidylinositol (PtdIns) phosphatase that specifically hydrolyzes the 5-phosphate of phosphatidylinositol-3,4,5-trisphosphate (PtdIns(3,4,5)P3) to produce PtdIns(3,4)P2, thereby negatively regulating the PI3K (phosphoinositide 3-kinase) pathways. Able also to hydrolyzes the 5-phosphate of phosphatidylinositol-4,5-bisphosphate (PtdIns(4,5)P3) and inositol 1,3,4,5-tetrakisphosphate. Acts as a negative regulator of B-cell antigen receptor signaling. Mediates signaling from the FC-gamma-RIIB receptor (FCGR2B), playing a central role in terminating signal transduction from activating immune/hematopoietic cell receptor systems. Acts as a negative regulator of myeloid cell proliferation/survival and chemotaxis, mast cell degranulation, immune cells homeostasis, integrin alpha-IIb/beta-3 signaling in platelets and JNK signaling in B-cells. Regulates proliferation of osteoclast precursors, macrophage programming, phagocytosis and activation and is required for endotoxin tolerance. Involved in the control of cell-cell junctions, CD32a signaling in neutrophils and modulation of EGF-induced phospholipase C activity. Key regulator of neutrophil migration, by governing the formation of the leading edge and polarization required for chemotaxis. Modulates FCGR3/CD16-mediated cytotoxicity in NK cells. Mediates the activin/TGF-beta-induced apoptosis through its Smad-dependent expression. In Homo sapiens (Human), this protein is Phosphatidylinositol 3,4,5-trisphosphate 5-phosphatase 1 (INPP5D).